A 432-amino-acid polypeptide reads, in one-letter code: Adenosylhomocysteinase (432 aa).

S2 carries the N-acetylserine modification. Substrate-binding residues include T57, D131, and E156. T157–T159 contacts NAD(+). Phosphoserine is present on S183. Substrate contacts are provided by K186 and D190. At K186 the chain carries N6-(2-hydroxyisobutyryl)lysine. Residue Y193 is modified to Phosphotyrosine. NAD(+) is bound by residues G222–G227, E243, N248, I299–H301, N346, and H353.

The protein belongs to the adenosylhomocysteinase family. As to quaternary structure, homotetramer. Interaction with AHCYL1. The cofactor is NAD(+).

The protein resides in the cytoplasm. It localises to the melanosome. The protein localises to the nucleus. It is found in the endoplasmic reticulum. It catalyses the reaction S-adenosyl-L-homocysteine + H2O = L-homocysteine + adenosine. It participates in amino-acid biosynthesis; L-homocysteine biosynthesis; L-homocysteine from S-adenosyl-L-homocysteine: step 1/1. Its function is as follows. Catalyzes the hydrolysis of S-adenosyl-L-homocysteine to form adenosine and homocysteine. Binds copper ions. This is Adenosylhomocysteinase (AHCY) from Homo sapiens (Human).